The chain runs to 301 residues: GTPase Era (301 aa).

Positions 8-174 constitute an Era-type G domain; sequence KSGFVALVGR…LKTLKDYLPE (167 aa). Residues 16–23 form a G1 region; it reads GRPNVGKS. Residue 16–23 coordinates GTP; the sequence is GRPNVGKS. Positions 42-46 are G2; that stretch reads QTTRN. A G3 region spans residues 63-66; it reads DTPG. GTP-binding positions include 63–67 and 124–127; these read DTPGI and NKID. A G4 region spans residues 124–127; the sequence is NKID. Residues 153-155 are G5; that stretch reads ISA. The region spanning 197–282 is the KH type-2 domain; sequence IREQILRLTD…NLKLWVKVRR (86 aa).

The protein belongs to the TRAFAC class TrmE-Era-EngA-EngB-Septin-like GTPase superfamily. Era GTPase family. Monomer.

The protein localises to the cytoplasm. Its subcellular location is the cell membrane. Its function is as follows. An essential GTPase that binds both GDP and GTP, with rapid nucleotide exchange. Plays a role in 16S rRNA processing and 30S ribosomal subunit biogenesis and possibly also in cell cycle regulation and energy metabolism. The sequence is that of GTPase Era from Lactobacillus delbrueckii subsp. bulgaricus (strain ATCC 11842 / DSM 20081 / BCRC 10696 / JCM 1002 / NBRC 13953 / NCIMB 11778 / NCTC 12712 / WDCM 00102 / Lb 14).